Reading from the N-terminus, the 222-residue chain is Pro-opiomelanocortin-1 (222 aa).

The first 28 residues, 1 to 28 (MVRGERMLCPAWLLALAVLCAAGSEVRA), serve as a signal peptide directing secretion. The propeptide occupies 29–105 (QCMEDARCRD…DPESSPQHEH (77 aa)).

This sequence belongs to the POMC family. In terms of processing, specific enzymatic cleavages at paired basic residues yield the different active peptides.

It localises to the secreted. Stimulates the adrenal glands to release cortisol. Its function is as follows. Anorexigenic peptide. Increases the pigmentation of skin by increasing melanin production in melanocytes. Functionally, increases the pigmentation of skin by increasing melanin production in melanocytes. In terms of biological role, endogenous orexigenic opiate. Endogenous opiate. This chain is Pro-opiomelanocortin-1 (pomca), found in Cyprinus carpio (Common carp).